A 316-amino-acid chain; its full sequence is Putative phosphoribosylaminoimidazole-succinocarboxamide synthase 2 (316 aa).

The protein belongs to the SAICAR synthetase family.

The enzyme catalyses 5-amino-1-(5-phospho-D-ribosyl)imidazole-4-carboxylate + L-aspartate + ATP = (2S)-2-[5-amino-1-(5-phospho-beta-D-ribosyl)imidazole-4-carboxamido]succinate + ADP + phosphate + 2 H(+). The protein operates within purine metabolism; IMP biosynthesis via de novo pathway; 5-amino-1-(5-phospho-D-ribosyl)imidazole-4-carboxamide from 5-amino-1-(5-phospho-D-ribosyl)imidazole-4-carboxylate: step 1/2. The polypeptide is Putative phosphoribosylaminoimidazole-succinocarboxamide synthase 2 (purC2) (Agrobacterium fabrum (strain C58 / ATCC 33970) (Agrobacterium tumefaciens (strain C58))).